Consider the following 1845-residue polypeptide: Proteasome activator complex subunit 4 (1845 aa).

Residues 1–13 are compositionally biased toward basic and acidic residues; the sequence is MEPAERAGGRDPL. The tract at residues 1–26 is disordered; that stretch reads MEPAERAGGRDPLEPGGRPGPDPQGF. HEAT repeat units lie at residues 475–519 and 1000–1039; these read PEGP…LVDC and NFCCRDIIPLVLGFLRPDRQDVTQQQFKGALYCLLGNHSG. Phosphoserine is present on Ser-1123. HEAT repeat units lie at residues 1181-1219 and 1356-1394; these read RVLPLRAIRFFVENLNHDAIVVRKMAISAVAGILKQLKR and DAFLPVLKPHLERLVADSHESTQRCVAEIIAGLIRGSKH. Phosphoserine is present on Ser-1616. HEAT repeat units lie at residues 1638-1676 and 1682-1720; these read PHQVPLVLQVLNQTARSSSWHARYTVLTYLQTMVFYNLF and EDAVKDIRWLVISLLEDEQLEVREMAATTLSGLLQCNFL. A bromodomain-like (BRDL) region spans residues 1652 to 1740; the sequence is ARSSSWHARY…EQLCKTKLPK (89 aa).

It belongs to the BLM10 family. Homodimer. Component of the spermatoproteasome, a form of the proteasome specifically found in testis. Interacts with the 20S and 26S proteasomes. In terms of processing, phosphorylated.

Its subcellular location is the cytoplasm. The protein resides in the cytosol. It localises to the nucleus. The protein localises to the nucleus speckle. Its function is as follows. Associated component of the proteasome that specifically recognizes acetylated histones and promotes ATP- and ubiquitin-independent degradation of core histones during spermatogenesis and DNA damage response. Recognizes and binds acetylated histones via its bromodomain-like (BRDL) region and activates the proteasome by opening the gated channel for substrate entry. Binds to the core proteasome via its C-terminus, which occupies the same binding sites as the proteasomal ATPases, opening the closed structure of the proteasome via an active gating mechanism. Component of the spermatoproteasome, a form of the proteasome specifically found in testis: binds to acetylated histones and promotes degradation of histones, thereby participating actively to the exchange of histones during spermatogenesis. Also involved in DNA damage response in somatic cells, by promoting degradation of histones following DNA double-strand breaks. This chain is Proteasome activator complex subunit 4 (PSME4), found in Bos taurus (Bovine).